We begin with the raw amino-acid sequence, 256 residues long: Fructose-1,6-bisphosphatase/inositol-1-monophosphatase (256 aa).

Mg(2+) contacts are provided by Glu67, Asp83, Leu85, and Asp86. Substrate-binding positions include 86 to 88 (DGS), Arg170, Ile175, and Arg194. Asp201 serves as a coordination point for Mg(2+).

Belongs to the inositol monophosphatase superfamily. FBPase class 4 family. As to quaternary structure, homodimer. Requires Mg(2+) as cofactor.

It catalyses the reaction beta-D-fructose 1,6-bisphosphate + H2O = beta-D-fructose 6-phosphate + phosphate. The catalysed reaction is a myo-inositol phosphate + H2O = myo-inositol + phosphate. In terms of biological role, phosphatase with broad specificity; it can dephosphorylate fructose 1,6-bisphosphate (FBP) and inositol-1-phosphate (IMP). However, while possessing a high FBPase activity in vitro, does not participate in gluconeogenesis in vivo. In Thermococcus kodakarensis (strain ATCC BAA-918 / JCM 12380 / KOD1) (Pyrococcus kodakaraensis (strain KOD1)), this protein is Fructose-1,6-bisphosphatase/inositol-1-monophosphatase (suhB).